The sequence spans 300 residues: Tyrosine recombinase XerC (300 aa).

Residues 2-88 form the Core-binding (CB) domain; that stretch reads TQEGKLEQQF…SLRSFYTFLL (87 aa). The Tyr recombinase domain occupies 109-294; the sequence is RLPKFFYSEE…TKEHLKSTYM (186 aa). Active-site residues include arginine 150, lysine 174, histidine 246, arginine 249, and histidine 272. The O-(3'-phospho-DNA)-tyrosine intermediate role is filled by tyrosine 281.

Belongs to the 'phage' integrase family. XerC subfamily. In terms of assembly, forms a cyclic heterotetrameric complex composed of two molecules of XerC and two molecules of XerD.

Its subcellular location is the cytoplasm. Its function is as follows. Site-specific tyrosine recombinase, which acts by catalyzing the cutting and rejoining of the recombining DNA molecules. The XerC-XerD complex is essential to convert dimers of the bacterial chromosome into monomers to permit their segregation at cell division. It also contributes to the segregational stability of plasmids. The protein is Tyrosine recombinase XerC of Listeria welshimeri serovar 6b (strain ATCC 35897 / DSM 20650 / CCUG 15529 / CIP 8149 / NCTC 11857 / SLCC 5334 / V8).